The sequence spans 186 residues: Ribosome-recycling factor (186 aa).

This sequence belongs to the RRF family.

The protein localises to the cytoplasm. Its function is as follows. Responsible for the release of ribosomes from messenger RNA at the termination of protein biosynthesis. May increase the efficiency of translation by recycling ribosomes from one round of translation to another. The chain is Ribosome-recycling factor from Chlorobium limicola (strain DSM 245 / NBRC 103803 / 6330).